The primary structure comprises 106 residues: Urease subunit beta (106 aa).

The protein belongs to the urease beta subunit family. Heterotrimer of UreA (gamma), UreB (beta) and UreC (alpha) subunits. Three heterotrimers associate to form the active enzyme.

The protein localises to the cytoplasm. It carries out the reaction urea + 2 H2O + H(+) = hydrogencarbonate + 2 NH4(+). Its pathway is nitrogen metabolism; urea degradation; CO(2) and NH(3) from urea (urease route): step 1/1. The sequence is that of Urease subunit beta from Synechococcus sp. (strain CC9902).